A 428-amino-acid polypeptide reads, in one-letter code: Enolase (428 aa).

Glutamine 165 is a binding site for (2R)-2-phosphoglycerate. The Proton donor role is filled by glutamate 207. The Mg(2+) site is built by aspartate 244, glutamate 283, and aspartate 310. 4 residues coordinate (2R)-2-phosphoglycerate: lysine 335, arginine 364, serine 365, and lysine 386. Lysine 335 acts as the Proton acceptor in catalysis.

It belongs to the enolase family. The cofactor is Mg(2+).

The protein localises to the cytoplasm. The protein resides in the secreted. It localises to the cell surface. The enzyme catalyses (2R)-2-phosphoglycerate = phosphoenolpyruvate + H2O. It functions in the pathway carbohydrate degradation; glycolysis; pyruvate from D-glyceraldehyde 3-phosphate: step 4/5. Functionally, catalyzes the reversible conversion of 2-phosphoglycerate (2-PG) into phosphoenolpyruvate (PEP). It is essential for the degradation of carbohydrates via glycolysis. The polypeptide is Enolase (Chlamydia pneumoniae (Chlamydophila pneumoniae)).